The primary structure comprises 266 residues: ATP synthase subunit a (266 aa).

The next 5 helical transmembrane spans lie at 28–48 (SINV…LVIF), 88–108 (LIAP…LMDL), 141–161 (DVNI…FYSI), 206–226 (LFGN…LLPW), and 237–257 (AIFH…LTVV).

It belongs to the ATPase A chain family. F-type ATPases have 2 components, CF(1) - the catalytic core - and CF(0) - the membrane proton channel. CF(1) has five subunits: alpha(3), beta(3), gamma(1), delta(1), epsilon(1). CF(0) has three main subunits: a(1), b(2) and c(9-12). The alpha and beta chains form an alternating ring which encloses part of the gamma chain. CF(1) is attached to CF(0) by a central stalk formed by the gamma and epsilon chains, while a peripheral stalk is formed by the delta and b chains.

The protein localises to the cell inner membrane. Its function is as follows. Key component of the proton channel; it plays a direct role in the translocation of protons across the membrane. This Pectobacterium carotovorum subsp. carotovorum (strain PC1) protein is ATP synthase subunit a.